Here is a 22-residue protein sequence, read N- to C-terminus: Antimicrobial peptide 5 (22 aa).

Leucine 22 carries the post-translational modification Leucine amide.

As to expression, skin.

The protein resides in the secreted. In terms of biological role, has very strong antimicrobial activity against Gram-positive bacterium S.aureus, Gram-negative bacterium E.coli and yeast C.albicans. Has strong hemolytic activity against human red blood cells. The sequence is that of Antimicrobial peptide 5 from Xenopus tropicalis (Western clawed frog).